The chain runs to 178 residues: ATP-dependent protease subunit HslV (178 aa).

Threonine 7 is a catalytic residue. Na(+) is bound by residues glycine 162, cysteine 165, and threonine 168.

Belongs to the peptidase T1B family. HslV subfamily. In terms of assembly, a double ring-shaped homohexamer of HslV is capped on each side by a ring-shaped HslU homohexamer. The assembly of the HslU/HslV complex is dependent on binding of ATP.

It localises to the cytoplasm. It catalyses the reaction ATP-dependent cleavage of peptide bonds with broad specificity.. Allosterically activated by HslU binding. Its function is as follows. Protease subunit of a proteasome-like degradation complex believed to be a general protein degrading machinery. In Ralstonia nicotianae (strain ATCC BAA-1114 / GMI1000) (Ralstonia solanacearum), this protein is ATP-dependent protease subunit HslV.